The following is a 92-amino-acid chain: Putative septation protein SpoVG (92 aa).

Belongs to the SpoVG family.

Its function is as follows. Could be involved in septation. The protein is Putative septation protein SpoVG of Clostridioides difficile (strain 630) (Peptoclostridium difficile).